A 572-amino-acid chain; its full sequence is Proline--tRNA ligase (572 aa).

Belongs to the class-II aminoacyl-tRNA synthetase family. ProS type 1 subfamily. As to quaternary structure, homodimer.

The protein resides in the cytoplasm. The enzyme catalyses tRNA(Pro) + L-proline + ATP = L-prolyl-tRNA(Pro) + AMP + diphosphate. In terms of biological role, catalyzes the attachment of proline to tRNA(Pro) in a two-step reaction: proline is first activated by ATP to form Pro-AMP and then transferred to the acceptor end of tRNA(Pro). As ProRS can inadvertently accommodate and process non-cognate amino acids such as alanine and cysteine, to avoid such errors it has two additional distinct editing activities against alanine. One activity is designated as 'pretransfer' editing and involves the tRNA(Pro)-independent hydrolysis of activated Ala-AMP. The other activity is designated 'posttransfer' editing and involves deacylation of mischarged Ala-tRNA(Pro). The misacylated Cys-tRNA(Pro) is not edited by ProRS. This is Proline--tRNA ligase from Escherichia coli O9:H4 (strain HS).